The chain runs to 1216 residues: Regulator of telomere elongation helicase 1 (1216 aa).

The Helicase ATP-binding domain occupies 7–295 (KGVTVDFPFQ…TKVAQQAELH (289 aa)). 42–49 (SPTGTGKT) serves as a coordination point for ATP. Residues cysteine 144, cysteine 162, cysteine 171, and cysteine 206 each coordinate [4Fe-4S] cluster. Positions 150-166 (KKQESNHMQVHLCRRKV) match the Nuclear localization signal motif. Residues 249 to 252 (DEAH) carry the DEAH box motif. The Nuclear localization signal signature appears at 874–880 (QRGRRRK). Disordered regions lie at residues 978–1018 (GCSS…ATRQ) and 1140–1172 (GPGT…RKTQ). A PIP-box motif is present at residues 1172 to 1179 (QSKISSFL).

The protein belongs to the helicase family. RAD3/XPD subfamily. In terms of assembly, interacts with TERF1. Interacts (via PIP-box) with PCNA; the interaction is direct and essential for suppressing telomere fragility. Interacts with MMS19; the interaction mediates the association of RTEL1 with the cytosolic iron-sulfur protein assembly (CIA) complex. Highly expressed in adult testis, liver and ovary.

The protein localises to the nucleus. The catalysed reaction is ATP + H2O = ADP + phosphate + H(+). Its function is as follows. A probable ATP-dependent DNA helicase implicated in telomere-length regulation, DNA repair and the maintenance of genomic stability. Acts as an anti-recombinase to counteract toxic recombination and limit crossover during meiosis. Regulates meiotic recombination and crossover homeostasis by physically dissociating strand invasion events and thereby promotes noncrossover repair by meiotic synthesis dependent strand annealing (SDSA) as well as disassembly of D loop recombination intermediates. Also disassembles T loops and prevents telomere fragility by counteracting telomeric G4-DNA structures, which together ensure the dynamics and stability of the telomere. The chain is Regulator of telomere elongation helicase 1 from Bos taurus (Bovine).